Reading from the N-terminus, the 247-residue chain is Ribonuclease PH (247 aa).

Residues arginine 96 and 134–136 (GTR) contribute to the phosphate site.

The protein belongs to the RNase PH family. Homohexameric ring arranged as a trimer of dimers.

It carries out the reaction tRNA(n+1) + phosphate = tRNA(n) + a ribonucleoside 5'-diphosphate. Phosphorolytic 3'-5' exoribonuclease that plays an important role in tRNA 3'-end maturation. Removes nucleotide residues following the 3'-CCA terminus of tRNAs; can also add nucleotides to the ends of RNA molecules by using nucleoside diphosphates as substrates, but this may not be physiologically important. Probably plays a role in initiation of 16S rRNA degradation (leading to ribosome degradation) during starvation. This chain is Ribonuclease PH, found in Tropheryma whipplei (strain TW08/27) (Whipple's bacillus).